Consider the following 154-residue polypeptide: Protein MGF 300-2R (154 aa).

Belongs to the asfivirus MGF 300 family.

In terms of biological role, plays a role in virus cell tropism, and may be required for efficient virus replication in macrophages. This Ornithodoros (relapsing fever ticks) protein is Protein MGF 300-2R.